A 927-amino-acid chain; its full sequence is BTB/POZ domain-containing protein KCTD19 (927 aa).

One can recognise a BTB 1 domain in the interval N18–T72. S270 carries the phosphoserine modification. The BTB 2 domain occupies I399–L486. Residues V664–A760 are disordered. The segment covering D731–P743 has biased composition (basic and acidic residues).

Identified in a complex with ZNF541, HDAC1 and HSPA2. Identified in a complex with ZNF541 and HDAC1. Identified in a complex with HDAC1, HDAC2, DNTTIP1 and ZNF541. In terms of tissue distribution, detected in adult testis.

The protein localises to the nucleus. Transcription regulator which is essential for male fertility and for the completion of meiotic prophase in spermatocytes. Regulates progression of the pachytene stage of meiotic prophase and promotes the transcriptional activation activity ZNF541. Required for the organization of chromosomes during metaphase I. This is BTB/POZ domain-containing protein KCTD19 (Kctd19) from Mus musculus (Mouse).